Reading from the N-terminus, the 436-residue chain is Histidinol dehydrogenase (436 aa).

3 residues coordinate NAD(+): tyrosine 130, glutamine 191, and asparagine 214. 3 residues coordinate substrate: serine 237, glutamine 259, and histidine 262. 2 residues coordinate Zn(2+): glutamine 259 and histidine 262. Catalysis depends on proton acceptor residues glutamate 327 and histidine 328. Histidine 328, aspartate 361, glutamate 415, and histidine 420 together coordinate substrate. Zn(2+) is bound at residue aspartate 361. Residue histidine 420 coordinates Zn(2+).

This sequence belongs to the histidinol dehydrogenase family. The cofactor is Zn(2+).

The catalysed reaction is L-histidinol + 2 NAD(+) + H2O = L-histidine + 2 NADH + 3 H(+). The protein operates within amino-acid biosynthesis; L-histidine biosynthesis; L-histidine from 5-phospho-alpha-D-ribose 1-diphosphate: step 9/9. Catalyzes the sequential NAD-dependent oxidations of L-histidinol to L-histidinaldehyde and then to L-histidine. This chain is Histidinol dehydrogenase, found in Geobacter metallireducens (strain ATCC 53774 / DSM 7210 / GS-15).